Consider the following 324-residue polypeptide: Delta-aminolevulinic acid dehydratase (324 aa).

Residues C118, C120, and C128 each coordinate Zn(2+). The active-site Schiff-base intermediate with substrate is the K195. The 5-aminolevulinate site is built by R205 and R217. Position 233 (E233) interacts with Mg(2+). The active-site Schiff-base intermediate with substrate is K248. Residues S274 and Y313 each coordinate 5-aminolevulinate.

This sequence belongs to the ALAD family. In terms of assembly, homooctamer. The cofactor is Zn(2+).

It carries out the reaction 2 5-aminolevulinate = porphobilinogen + 2 H2O + H(+). It participates in porphyrin-containing compound metabolism; protoporphyrin-IX biosynthesis; coproporphyrinogen-III from 5-aminolevulinate: step 1/4. Catalyzes an early step in the biosynthesis of tetrapyrroles. Binds two molecules of 5-aminolevulinate per subunit, each at a distinct site, and catalyzes their condensation to form porphobilinogen. In Staphylococcus epidermidis (strain ATCC 12228 / FDA PCI 1200), this protein is Delta-aminolevulinic acid dehydratase (hemB).